We begin with the raw amino-acid sequence, 309 residues long: Ribonuclease Z (309 aa).

7 residues coordinate Zn(2+): His63, His65, Asp67, His68, His141, Asp212, and His270. Asp67 serves as the catalytic Proton acceptor.

Belongs to the RNase Z family. Homodimer. It depends on Zn(2+) as a cofactor.

The catalysed reaction is Endonucleolytic cleavage of RNA, removing extra 3' nucleotides from tRNA precursor, generating 3' termini of tRNAs. A 3'-hydroxy group is left at the tRNA terminus and a 5'-phosphoryl group is left at the trailer molecule.. Functionally, zinc phosphodiesterase, which displays some tRNA 3'-processing endonuclease activity. Probably involved in tRNA maturation, by removing a 3'-trailer from precursor tRNA. In Lactobacillus johnsonii (strain CNCM I-12250 / La1 / NCC 533), this protein is Ribonuclease Z.